The sequence spans 269 residues: Formamidopyrimidine-DNA glycosylase (269 aa).

The active-site Schiff-base intermediate with DNA is Pro2. Glu3 acts as the Proton donor in catalysis. Residue Lys57 is the Proton donor; for beta-elimination activity of the active site. His90, Arg109, and Lys150 together coordinate DNA. The FPG-type zinc-finger motif lies at 235 to 269; it reads QVYGKGGLPCPKCGTELAEVKIGQRATVYCSQCQQ. Arg259 acts as the Proton donor; for delta-elimination activity in catalysis.

Belongs to the FPG family. As to quaternary structure, monomer. Requires Zn(2+) as cofactor.

It catalyses the reaction Hydrolysis of DNA containing ring-opened 7-methylguanine residues, releasing 2,6-diamino-4-hydroxy-5-(N-methyl)formamidopyrimidine.. It carries out the reaction 2'-deoxyribonucleotide-(2'-deoxyribose 5'-phosphate)-2'-deoxyribonucleotide-DNA = a 3'-end 2'-deoxyribonucleotide-(2,3-dehydro-2,3-deoxyribose 5'-phosphate)-DNA + a 5'-end 5'-phospho-2'-deoxyribonucleoside-DNA + H(+). In terms of biological role, involved in base excision repair of DNA damaged by oxidation or by mutagenic agents. Acts as a DNA glycosylase that recognizes and removes damaged bases. Has a preference for oxidized purines, such as 7,8-dihydro-8-oxoguanine (8-oxoG). Has AP (apurinic/apyrimidinic) lyase activity and introduces nicks in the DNA strand. Cleaves the DNA backbone by beta-delta elimination to generate a single-strand break at the site of the removed base with both 3'- and 5'-phosphates. The chain is Formamidopyrimidine-DNA glycosylase from Photobacterium damsela subsp. piscicida (Pasteurella piscicida).